Consider the following 288-residue polypeptide: Acetyl-coenzyme A carboxylase carboxyl transferase subunit beta (288 aa).

One can recognise a CoA carboxyltransferase N-terminal domain in the interval 24-288 (LWVKCPESGE…TRTPRASEAA (265 aa)).

The protein belongs to the AccD/PCCB family. In terms of assembly, acetyl-CoA carboxylase is a heterohexamer composed of biotin carboxyl carrier protein (AccB), biotin carboxylase (AccC) and two subunits each of ACCase subunit alpha (AccA) and ACCase subunit beta (AccD).

It localises to the cytoplasm. The enzyme catalyses N(6)-carboxybiotinyl-L-lysyl-[protein] + acetyl-CoA = N(6)-biotinyl-L-lysyl-[protein] + malonyl-CoA. It participates in lipid metabolism; malonyl-CoA biosynthesis; malonyl-CoA from acetyl-CoA: step 1/1. Component of the acetyl coenzyme A carboxylase (ACC) complex. Biotin carboxylase (BC) catalyzes the carboxylation of biotin on its carrier protein (BCCP) and then the CO(2) group is transferred by the transcarboxylase to acetyl-CoA to form malonyl-CoA. This Methylocella silvestris (strain DSM 15510 / CIP 108128 / LMG 27833 / NCIMB 13906 / BL2) protein is Acetyl-coenzyme A carboxylase carboxyl transferase subunit beta.